The chain runs to 236 residues: Phosphoribosylaminoimidazole-succinocarboxamide synthase (236 aa).

The protein belongs to the SAICAR synthetase family.

It carries out the reaction 5-amino-1-(5-phospho-D-ribosyl)imidazole-4-carboxylate + L-aspartate + ATP = (2S)-2-[5-amino-1-(5-phospho-beta-D-ribosyl)imidazole-4-carboxamido]succinate + ADP + phosphate + 2 H(+). Its pathway is purine metabolism; IMP biosynthesis via de novo pathway; 5-amino-1-(5-phospho-D-ribosyl)imidazole-4-carboxamide from 5-amino-1-(5-phospho-D-ribosyl)imidazole-4-carboxylate: step 1/2. The sequence is that of Phosphoribosylaminoimidazole-succinocarboxamide synthase from Pseudomonas syringae pv. tomato (strain ATCC BAA-871 / DC3000).